We begin with the raw amino-acid sequence, 151 residues long: Decarboxylase nsrE (151 aa).

Positions 31-126 (AGMTEEDYHN…VGDHENFADT (96 aa)) constitute an EthD domain.

Belongs to the tpcK family.

The catalysed reaction is atrochrysone carboxylate + H(+) = atrochrysone + CO2. The protein operates within secondary metabolite biosynthesis. Functionally, decarboxylase; part of the gene cluster that mediates the biosynthesis of the tetrahydroxanthone dimer neosartorin, which exhibits antibacterial activity. The two different monomeric units appear to be synthesized by the same set of enzymes, among which the Baeyer-Villiger monooxygenase nsrF is the key enzyme for the divergence of the biosynthetic routes. The pathway begins with the synthesis of atrochrysone thioester by the polyketide synthase nsrB. The atrochrysone carboxyl ACP thioesterase nsrC then breaks the thioester bond and releases the atrochrysone carboxylic acid from AacuL. Atrochrysone carboxylic acid is decarboxylated by the decarboxylase nsrE, and oxidized by the anthrone oxygenase nsrD to yield emodin. Emodin is then reduced to emodin hydroquinone by the oxidoreductase nsrR. A-ring reduction by the short chain dehydrogenase nsrJ, dehydration by the scytalone dehydratase-like protein nsrI and probable spontaneous re-oxidation, results in overall deoxygenation to chrysophanol. The Baeyer-Villiger monooxygenase nsrF accepts chrysophanol as a substrate to insert one oxygen atom at two different positions to yield the precursors of both monomric units. NsrF is promiscuous/flexible in interacting with the 2 (non methylated and methylated) aromatic rings of chrysophanol, thus diverging the biosynthetic pathway at this point. After the hydrolysis of the lactones, methylesterification by the methyltransferase nsrG yields respectively moniliphenone and 2,2',6'-trihydroxy-4-methyl-6-methoxya-cyldiphenylmethanone. The next steps are the hydroxylation by the FAD-dependent monooxygenase nsrK, followed by isomerization by the monooxygenase nsrQ. The short chain dehydrogenase/reductase nsrO then catalyzes the C-5 ketoreduction to give the xanthone skeleton of blennolide C and 5-acetylblennolide A. The acetyltransferase nsrL has a strict substrate specificity and uses only blennolide A but not blennolide C to yield 5-acetylblennolide A as the single-acetylated product. In the final step of the biosynthesis, the heterodimerization of the 2 xanthones, blennolide C and 5-acetylblennolide A, is catalyzed by the cytochrome P450 monooxygenase nsrP. NsrP can utilize at least three different xanthones as its substrates to perform the dimerization reaction. This is Decarboxylase nsrE from Aspergillus novofumigatus (strain IBT 16806).